The chain runs to 218 residues: Probable transaldolase (218 aa).

The active-site Schiff-base intermediate with substrate is lysine 83.

The protein belongs to the transaldolase family. Type 3B subfamily.

The protein resides in the cytoplasm. The catalysed reaction is D-sedoheptulose 7-phosphate + D-glyceraldehyde 3-phosphate = D-erythrose 4-phosphate + beta-D-fructose 6-phosphate. The protein operates within carbohydrate degradation; pentose phosphate pathway; D-glyceraldehyde 3-phosphate and beta-D-fructose 6-phosphate from D-ribose 5-phosphate and D-xylulose 5-phosphate (non-oxidative stage): step 2/3. Transaldolase is important for the balance of metabolites in the pentose-phosphate pathway. This Kosmotoga olearia (strain ATCC BAA-1733 / DSM 21960 / TBF 19.5.1) protein is Probable transaldolase.